Here is a 246-residue protein sequence, read N- to C-terminus: Chanoclavine-I dehydrogenase easD (246 aa).

Residues 1–20 (MASVSSKIFAITGGASGIGA) form the signal peptide. NADP(+) is bound by residues Ile-18, Asp-66, Arg-132, Tyr-169, and Lys-173. The active-site Proton donor is the Tyr-169. Catalysis depends on Lys-173, which acts as the Lowers pKa of active site Tyr.

The protein belongs to the short-chain dehydrogenases/reductases (SDR) family. Homotetramer.

It catalyses the reaction chanoclavine-I + NAD(+) = chanoclavine-I aldehyde + NADH + H(+). Its pathway is alkaloid biosynthesis; ergot alkaloid biosynthesis. Chanoclavine-I dehydrogenase; part of the gene cluster that mediates the biosynthesis of fungal ergot alkaloid. DmaW catalyzes the first step of ergot alkaloid biosynthesis by condensing dimethylallyl diphosphate (DMAP) and tryptophan to form 4-dimethylallyl-L-tryptophan. The second step is catalyzed by the methyltransferase easF that methylates 4-dimethylallyl-L-tryptophan in the presence of S-adenosyl-L-methionine, resulting in the formation of 4-dimethylallyl-L-abrine. The catalase easC and the FAD-dependent oxidoreductase easE then transform 4-dimethylallyl-L-abrine to chanoclavine-I which is further oxidized by easD in the presence of NAD(+), resulting in the formation of chanoclavine-I aldehyde. Chanoclavine-I aldehyde is the precursor of ergoamides and ergopeptines in Clavicipitaceae, and clavine-type alcaloids such as fumiclavine in Trichocomaceae. However, the metabolites downstream of chanoclavine-I aldehyde in Arthrodermataceae have not been identified yet. In Arthroderma benhamiae (strain ATCC MYA-4681 / CBS 112371) (Trichophyton mentagrophytes), this protein is Chanoclavine-I dehydrogenase easD.